Consider the following 1025-residue polypeptide: Rho GTPase-activating protein Graf (1025 aa).

Residues 271–388 (IFTKRGYLFL…WISAMDGTEP (118 aa)) enclose the PH domain. The 188-residue stretch at 402–589 (YHLDEAGFMF…ILIDNYERIF (188 aa)) folds into the Rho-GAP domain. Residues 824–866 (GSASGPQQHPPVQRGLHSYGQTKHYSPLMPTSTSSSNDSVCDS) are disordered. Low complexity predominate over residues 854 to 866 (TSTSSSNDSVCDS). The SH3 domain maps to 963 to 1023 (TGTARVRTLY…PENYVEHLKP (61 aa)).

As to quaternary structure, interacts with Egfr (when ubiquitinated). In the adult brain, expressed in the antennal lobe, the subesophageal ganglion and the alpha/beta neurons of the mushroom body.

The protein localises to the cytoplasm. It is found in the cytosol. It localises to the cytoplasmic vesicle. Functionally, GTPase-activating protein for Rho family proteins. Essential component of the CLIC (clathrin-independent carrier)/GEEC (GPI-anchored protein-enriched early endocytic compartment) endocytic pathway. During hematopoiesis, inhibits Egfr-ras-MAPK signaling by promoting Spi-induced Egfr internalization through CLIC/GEEC endocytosis, thereby preventing plasmatocyte overproliferation. Essential for normal mushroom body (MB) development and consequently the formation of olfactory long-term memories. During MD development, required to stop the MB beta-lobe from crossing the brain midline, possibly acting via its role in the CLIC/GEEC endocytic pathway to down-regulate the Egfr-ras-MAPK signaling at the tip of the beta-lobes. Required during embryo cellularization for maintaining and regulating the rate of actomyosin ring constriction. During cellularization, inhibits Rho-GTP levels at the furrow canal tip in a spatiotemporal manner, thus delaying the onset of actomyosin contraction and ensuring appropriate closure of the cells at the base of nuclei after membrane extension. This Drosophila melanogaster (Fruit fly) protein is Rho GTPase-activating protein Graf.